Consider the following 338-residue polypeptide: Ketol-acid reductoisomerase (NADP(+)) (338 aa).

The 181-residue stretch at 1 to 181 folds into the KARI N-terminal Rossmann domain; sequence MKVYYDKDAD…GGTKGGVIET (181 aa). Residues 24–27, Arg47, and Ser52 contribute to the NADP(+) site; that span reads YGSQ. Residue His107 is part of the active site. Gly133 serves as a coordination point for NADP(+). A KARI C-terminal knotted domain is found at 182–327; the sequence is NFREETETDL…GQLRDMMPWI (146 aa). Mg(2+) is bound by residues Asp190, Glu194, Glu226, and Glu230. Ser251 is a binding site for substrate.

The protein belongs to the ketol-acid reductoisomerase family. The cofactor is Mg(2+).

It carries out the reaction (2R)-2,3-dihydroxy-3-methylbutanoate + NADP(+) = (2S)-2-acetolactate + NADPH + H(+). It catalyses the reaction (2R,3R)-2,3-dihydroxy-3-methylpentanoate + NADP(+) = (S)-2-ethyl-2-hydroxy-3-oxobutanoate + NADPH + H(+). Its pathway is amino-acid biosynthesis; L-isoleucine biosynthesis; L-isoleucine from 2-oxobutanoate: step 2/4. It functions in the pathway amino-acid biosynthesis; L-valine biosynthesis; L-valine from pyruvate: step 2/4. Functionally, involved in the biosynthesis of branched-chain amino acids (BCAA). Catalyzes an alkyl-migration followed by a ketol-acid reduction of (S)-2-acetolactate (S2AL) to yield (R)-2,3-dihydroxy-isovalerate. In the isomerase reaction, S2AL is rearranged via a Mg-dependent methyl migration to produce 3-hydroxy-3-methyl-2-ketobutyrate (HMKB). In the reductase reaction, this 2-ketoacid undergoes a metal-dependent reduction by NADPH to yield (R)-2,3-dihydroxy-isovalerate. The sequence is that of Ketol-acid reductoisomerase (NADP(+)) from Aromatoleum aromaticum (strain DSM 19018 / LMG 30748 / EbN1) (Azoarcus sp. (strain EbN1)).